The primary structure comprises 348 residues: ATPase GET3 (348 aa).

26–33 (KGGVGKTT) contributes to the ATP binding site. The active site involves D57. ATP-binding residues include E241 and N268. Residues C280 and C283 each coordinate Zn(2+). 310 to 312 (PLL) contributes to the ATP binding site.

The protein belongs to the arsA ATPase family. As to quaternary structure, homodimer. Component of the Golgi to ER traffic (GET) complex, which is composed of GET1, GET2 and GET3. Within the complex, GET1 and GET2 form a heterotetramer which is stabilized by phosphatidylinositol binding and which binds to the GET3 homodimer. Interacts with the chloride channel protein GEF1.

The protein localises to the cytoplasm. It localises to the endoplasmic reticulum. Its subcellular location is the golgi apparatus. ATPase required for the post-translational delivery of tail-anchored (TA) proteins to the endoplasmic reticulum. Recognizes and selectively binds the transmembrane domain of TA proteins in the cytosol. This complex then targets to the endoplasmic reticulum by membrane-bound receptors GET1 and GET2, where the tail-anchored protein is released for insertion. This process is regulated by ATP binding and hydrolysis. ATP binding drives the homodimer towards the closed dimer state, facilitating recognition of newly synthesized TA membrane proteins. ATP hydrolysis is required for insertion. Subsequently, the homodimer reverts towards the open dimer state, lowering its affinity for the GET1-GET2 receptor, and returning it to the cytosol to initiate a new round of targeting. Cooperates with the HDEL receptor ERD2 to mediate the ATP-dependent retrieval of resident ER proteins that contain a C-terminal H-D-E-L retention signal from the Golgi to the ER. Involved in low-level resistance to the oxyanions arsenite and arsenate, and in heat tolerance. This Debaryomyces hansenii (strain ATCC 36239 / CBS 767 / BCRC 21394 / JCM 1990 / NBRC 0083 / IGC 2968) (Yeast) protein is ATPase GET3.